The sequence spans 297 residues: ER membrane protein complex subunit 2 (297 aa).

An N-acetylalanine modification is found at Ala-2. TPR repeat units lie at residues 87 to 120 (HRVK…DPTN), 155 to 188 (QEAW…NPYN), and 192 to 225 (CQQY…NNRN). Lys-255 bears the N6-acetyllysine mark.

Belongs to the EMC2 family. In terms of assembly, component of the ER membrane protein complex (EMC).

Its subcellular location is the endoplasmic reticulum membrane. Its function is as follows. Part of the endoplasmic reticulum membrane protein complex (EMC) that enables the energy-independent insertion into endoplasmic reticulum membranes of newly synthesized membrane proteins. Preferentially accommodates proteins with transmembrane domains that are weakly hydrophobic or contain destabilizing features such as charged and aromatic residues. Involved in the cotranslational insertion of multi-pass membrane proteins in which stop-transfer membrane-anchor sequences become ER membrane spanning helices. It is also required for the post-translational insertion of tail-anchored/TA proteins in endoplasmic reticulum membranes. By mediating the proper cotranslational insertion of N-terminal transmembrane domains in an N-exo topology, with translocated N-terminus in the lumen of the ER, controls the topology of multi-pass membrane proteins like the G protein-coupled receptors. By regulating the insertion of various proteins in membranes, it is indirectly involved in many cellular processes. In Bos taurus (Bovine), this protein is ER membrane protein complex subunit 2.